The sequence spans 264 residues: ATP synthase subunit a (264 aa).

A run of 6 helical transmembrane segments spans residues 29–49 (TWHI…LWIF), 87–107 (NALI…MNFM), 134–154 (DVNI…YYSI), 177–197 (IPVN…SLAL), 208–228 (LIFI…SLGV), and 235–255 (LIFH…LTIV).

It belongs to the ATPase A chain family. In terms of assembly, F-type ATPases have 2 components, CF(1) - the catalytic core - and CF(0) - the membrane proton channel. CF(1) has five subunits: alpha(3), beta(3), gamma(1), delta(1), epsilon(1). CF(0) has three main subunits: a(1), b(2) and c(9-12). The alpha and beta chains form an alternating ring which encloses part of the gamma chain. CF(1) is attached to CF(0) by a central stalk formed by the gamma and epsilon chains, while a peripheral stalk is formed by the delta and b chains.

It is found in the cell inner membrane. Functionally, key component of the proton channel; it plays a direct role in the translocation of protons across the membrane. The polypeptide is ATP synthase subunit a (Shewanella sp. (strain ANA-3)).